Reading from the N-terminus, the 363-residue chain is MRTIDSSSKKDGFRMPGEFEKHAGCYIIWPERPDNWRLGAKPAQKAFVDVATAISHFEPVTVVASSSQYVNARYMLSDEIRVVEMDNDDAWVRDSGPTFVVNDSGDVRGVDWSFNSWGGLVDGLYFPWDKDDQVAQKICELERKDRYRLADFVLEGGSIHVDGEGTLVTTEECLLSEGRNPQLSKQQIEMVLKEYLNLEKIIWLKRGIYLDETNGHVDNIFNYVRPGVVALAWTDDETDPQYEISKECFDILSNETDAKGRKLEVHKINVPKPILITDEESKGVDAVEGTLPREEGDRLAASYINYYTANGGVIFPLFGDPNDELAREKLQQLYPNCEVVGVKAREILLGGGNIHCITQQVPR.

The Amidino-cysteine intermediate role is filled by cysteine 356.

The protein belongs to the agmatine deiminase family.

It catalyses the reaction agmatine + H2O = N-carbamoylputrescine + NH4(+). This is Putative agmatine deiminase 1 from Listeria monocytogenes serovar 1/2a (strain ATCC BAA-679 / EGD-e).